Consider the following 264-residue polypeptide: NADH-quinone oxidoreductase subunit I 2 (264 aa).

4Fe-4S ferredoxin-type domains lie at 57 to 86 (GFLEVDSGICTGCQACERACPIGCIQISLE) and 98 to 127 (TQFDIDEAKCMFCGLCVEPCPTGSIQHTRE). Residues C66, C69, C72, C76, C107, C110, C113, and C117 each coordinate [4Fe-4S] cluster. The disordered stretch occupies residues 183–264 (APQFLPPEPP…AAPAANPESK (82 aa)). Low complexity predominate over residues 197–264 (AKPAAKAAPA…AAPAANPESK (68 aa)).

It belongs to the complex I 23 kDa subunit family. NDH-1 is composed of 14 different subunits. Subunits NuoA, H, J, K, L, M, N constitute the membrane sector of the complex. Requires [4Fe-4S] cluster as cofactor.

The protein localises to the cell inner membrane. It carries out the reaction a quinone + NADH + 5 H(+)(in) = a quinol + NAD(+) + 4 H(+)(out). NDH-1 shuttles electrons from NADH, via FMN and iron-sulfur (Fe-S) centers, to quinones in the respiratory chain. The immediate electron acceptor for the enzyme in this species is believed to be ubiquinone. Couples the redox reaction to proton translocation (for every two electrons transferred, four hydrogen ions are translocated across the cytoplasmic membrane), and thus conserves the redox energy in a proton gradient. The chain is NADH-quinone oxidoreductase subunit I 2 from Anaeromyxobacter dehalogenans (strain 2CP-C).